We begin with the raw amino-acid sequence, 158 residues long: MLNQLDNLTERVRGSNKLVDRWLHVRKHLLVAYYNLVGIKPGKESYMRLNEKALDDFCQSLVDYLSAGHFSIYERILHKLEGNGQLARAAKIWPQLEANTQQIMDYYDSSLETAIDHDNYLEFQQVLSDIGEALEARFVLEDKLILLVLDAARVKHPA.

It belongs to the Rsd/AlgQ family. Interacts with RpoD.

It is found in the cytoplasm. In terms of biological role, binds RpoD and negatively regulates RpoD-mediated transcription activation by preventing the interaction between the primary sigma factor RpoD with the catalytic core of the RNA polymerase and with promoter DNA. May be involved in replacement of the RNA polymerase sigma subunit from RpoD to RpoS during the transition from exponential growth to the stationary phase. In Escherichia coli (strain SMS-3-5 / SECEC), this protein is Regulator of sigma D.